A 620-amino-acid chain; its full sequence is Acetylcholinesterase 1 (620 aa).

An N-terminal signal peptide occupies residues 1–31; that stretch reads MRYSLLFFIFLPCVITAVDLIHLHDGSPLFG. A glycan (N-linked (GlcNAc...) asparagine) is linked at Asn-74. Cys-82 and Cys-109 form a disulfide bridge. The active-site Acyl-ester intermediate is Ser-216. Cysteines 270 and 286 form a disulfide. N-linked (GlcNAc...) asparagine glycosylation is present at Asn-272. Catalysis depends on charge relay system residues Glu-346 and His-468. Cys-430 and Cys-558 are joined by a disulfide. 2 N-linked (GlcNAc...) asparagine glycosylation sites follow: Asn-486 and Asn-536.

Belongs to the type-B carboxylesterase/lipase family. In terms of assembly, oligomer composed of disulfide-linked homodimers.

It is found in the synapse. The protein localises to the secreted. It localises to the cell membrane. The enzyme catalyses acetylcholine + H2O = choline + acetate + H(+). Its function is as follows. Rapidly hydrolyzes choline released into the synapse. In Caenorhabditis briggsae, this protein is Acetylcholinesterase 1 (ace-1).